We begin with the raw amino-acid sequence, 725 residues long: N-alpha-acetyltransferase 35, NatC auxiliary subunit (725 aa).

A disordered region spans residues 548-573 (ERIMEEQQKGRSSKKTKKKKKVRPLS). Over residues 558-571 (RSSKKTKKKKKVRP) the composition is skewed to basic residues.

This sequence belongs to the MAK10 family. As to quaternary structure, component of the N-terminal acetyltransferase C (NatC) complex, which is composed of NAA35, NAA38 and NAA30. Expressed in primary spermatocytes, basal epidermis, interstitial fibroblasts of skeletal muscle, and intestinal crypts.

Its subcellular location is the cytoplasm. Its function is as follows. Auxillary component of the N-terminal acetyltransferase C (NatC) complex which catalyzes acetylation of N-terminal methionine residues. N-terminal acetylation protects proteins from ubiquitination and degradation by the N-end rule pathway. Involved in regulation of apoptosis and proliferation of smooth muscle cells. The protein is N-alpha-acetyltransferase 35, NatC auxiliary subunit (Naa35) of Rattus norvegicus (Rat).